The sequence spans 871 residues: Protein pob1 (871 aa).

One can recognise an SH3 domain in the interval 2–65; that stretch reads ASQRFVIALH…PASHVELISD (64 aa). Residues 42 to 168 are disordered; the sequence is WWEGEDEQGN…PSSDLSNFNT (127 aa). The span at 62–80 shows a compositional bias: basic and acidic residues; that stretch reads LISDERSDSSDSRRGKEDF. Low complexity-rich tracts occupy residues 88-100 and 109-124; these read TRSS…STSS and LYSN…SILN. Residues 131–168 show a composition bias toward polar residues; it reads SKPSVPSNFNSMFPSSKQEGPSPLLDNQPSSDLSNFNT. Phosphoserine occurs at positions 224 and 225. Phosphotyrosine is present on Tyr229. Ser241 bears the Phosphoserine mark. An SAM domain is found at 250–313; it reads WSTEEVVEWL…LRKIQQLKDS (64 aa). Positions 329–343 are enriched in low complexity; it reads ISVSQSSDSSSSIPK. Disordered regions lie at residues 329 to 371 and 384 to 670; these read ISVS…NRPT and PDLD…KSKR. Composition is skewed to polar residues over residues 384-395 and 404-451; these read PDLDSSPSTDWN and TPSS…NSGL. Residues Ser433, Ser439, and Ser440 each carry the phosphoserine modification. Thr442 carries the phosphothreonine modification. Position 444 is a phosphoserine (Ser444). Positions 456–467 are enriched in low complexity; the sequence is TEPISSPSTSSI. Residues 492–511 show a composition bias toward polar residues; it reads QPSSNVPTKFTGGASESSSV. Ser549 carries the phosphoserine modification. Residues 549-560 show a composition bias toward low complexity; the sequence is SPSSISSRLPSS. 2 stretches are compositionally biased toward polar residues: residues 561–574 and 583–606; these read NLEQ…TKSP and KASS…NYAT. The PH domain maps to 698 to 808; the sequence is TADCHGWMRK…WSSAFLKATV (111 aa).

Its subcellular location is the cytoplasm. The protein resides in the membrane. Has a role in cell elongation and separation. This Schizosaccharomyces pombe (strain 972 / ATCC 24843) (Fission yeast) protein is Protein pob1 (pob1).